A 416-amino-acid polypeptide reads, in one-letter code: Serine hydroxymethyltransferase (416 aa).

(6S)-5,6,7,8-tetrahydrofolate contacts are provided by residues Leu-121 and 125 to 127 (GHL). Lys-229 carries the post-translational modification N6-(pyridoxal phosphate)lysine.

The protein belongs to the SHMT family. As to quaternary structure, homodimer. The cofactor is pyridoxal 5'-phosphate.

It localises to the cytoplasm. It carries out the reaction (6R)-5,10-methylene-5,6,7,8-tetrahydrofolate + glycine + H2O = (6S)-5,6,7,8-tetrahydrofolate + L-serine. It functions in the pathway one-carbon metabolism; tetrahydrofolate interconversion. The protein operates within amino-acid biosynthesis; glycine biosynthesis; glycine from L-serine: step 1/1. In terms of biological role, catalyzes the reversible interconversion of serine and glycine with tetrahydrofolate (THF) serving as the one-carbon carrier. This reaction serves as the major source of one-carbon groups required for the biosynthesis of purines, thymidylate, methionine, and other important biomolecules. Also exhibits THF-independent aldolase activity toward beta-hydroxyamino acids, producing glycine and aldehydes, via a retro-aldol mechanism. The sequence is that of Serine hydroxymethyltransferase from Azoarcus sp. (strain BH72).